The following is a 132-amino-acid chain: Histone H2B.1 (132 aa).

The segment covering 1 to 13 (MSSKASKAPASKA) has biased composition (low complexity). The tract at residues 1–40 (MSSKASKAPASKAPAEKKPAAKKTSSSVDASKKRTKTRKE) is disordered. K7 bears the N6-acetyllysine; alternate mark. K7 participates in a covalent cross-link: Glycyl lysine isopeptide (Lys-Gly) (interchain with G-Cter in SUMO); alternate. S11 is subject to Phosphoserine. At K12 the chain carries N6-acetyllysine. N6-acetyllysine; alternate is present on K17. A Glycyl lysine isopeptide (Lys-Gly) (interchain with G-Cter in SUMO); alternate cross-link involves residue K17. K18 is covalently cross-linked (Glycyl lysine isopeptide (Lys-Gly) (interchain with G-Cter in SUMO)). K125 is covalently cross-linked (Glycyl lysine isopeptide (Lys-Gly) (interchain with G-Cter in ubiquitin)).

Belongs to the histone H2B family. In terms of assembly, the nucleosome is a histone octamer containing two molecules each of H2A, H2B, H3 and H4 assembled in one H3-H4 heterotetramer and two H2A-H2B heterodimers. The octamer wraps approximately 147 bp of DNA. In terms of processing, monoubiquitinated by the UBC2-BRE1 complex to form H2BK123ub1. H2BK123ub1 gives a specific tag for epigenetic transcriptional activation and is also prerequisite for H3K4me and H3K79me formation. H2BK123ub1 also modulates the formation of double-strand breaks during meiosis and is a prerequisite for DNA-damage checkpoint activation. Phosphorylated by STE20 to form H2BS10ph during progression through meiotic prophase. May be correlated with chromosome condensation. Post-translationally, acetylated by GCN5 to form H2BK11ac and H2BK16ac. H2BK16ac can also be formed by ESA1. Acetylation of N-terminal lysines and particularly formation of H2BK11acK16ac has a positive effect on transcription. In terms of processing, sumoylation to form H2BK6su and probably also H2BK16su or H2BK17su, occurs preferentially near the telomeres and represses gene transcription.

The protein resides in the nucleus. It localises to the chromosome. Functionally, core component of nucleosome. Nucleosomes wrap and compact DNA into chromatin, limiting DNA accessibility to the cellular machineries which require DNA as a template. Histones thereby play a central role in transcription regulation, DNA repair, DNA replication and chromosomal stability. DNA accessibility is regulated via a complex set of post-translational modifications of histones, also called histone code, and nucleosome remodeling. This chain is Histone H2B.1 (HTB1), found in Eremothecium gossypii (strain ATCC 10895 / CBS 109.51 / FGSC 9923 / NRRL Y-1056) (Yeast).